The following is a 94-amino-acid chain: Evasin P1086 (94 aa).

Positions 1–28 (MAFNVITFLQLAVFVVILFNINLHSASA) are cleaved as a signal peptide. Intrachain disulfides connect Cys48-Cys67, Cys52-Cys69, and Cys63-Cys80. Asn74 carries N-linked (GlcNAc...) asparagine glycosylation.

It is found in the secreted. Its function is as follows. Salivary chemokine-binding protein which binds to host chemokines CXCL1, CXCL2, CXCL3, CXCL5, CXCL6, CXCL10, CXCL12 and CXCL13. This Ixodes ricinus (Common tick) protein is Evasin P1086.